Reading from the N-terminus, the 325-residue chain is tRNA N(3)-methylcytidine methyltransferase Mettl2 (325 aa).

W96 and Y100 together coordinate S-adenosyl-L-methionine. 7 residues coordinate S-adenosyl-L-homocysteine: Y100, H112, E138, G140, D165, D191, and I212. G140, D165, D191, and I212 together coordinate S-adenosyl-L-methionine.

This sequence belongs to the methyltransferase superfamily. METL family. In terms of assembly, interacts with Psn. As to expression, widely expressed. Expressed in ovaries, head, thorax and abdomen of adult flies, and in the CNS of third instar larvae. Isoform 2 is predominantly expressed in larvae and in adult tissues that have been tested.

Its function is as follows. Probable methyltransferase. The protein is tRNA N(3)-methylcytidine methyltransferase Mettl2 of Drosophila melanogaster (Fruit fly).